The chain runs to 87 residues: Cytochrome c5 (87 aa).

Heme contacts are provided by Cys-19, Cys-22, His-23, and Met-63. The cysteines at positions 69 and 72 are disulfide-linked.

The protein belongs to the cytochrome c family. Homodimer. In terms of processing, binds 1 heme group per subunit.

Functionally, it is unreactive with cytochrome c reductase or oxidase but seems to function as an intermediate in nitrate respiration of facultative anaerobic pseudmonads. The chain is Cytochrome c5 from Ectopseudomonas mendocina (Pseudomonas mendocina).